Consider the following 294-residue polypeptide: MALTNNLWAFVFGILGNIISFVVFLAPVPTFVRICKKKSTEGFQSLPYVSALFSAMLWIYYAMQKDGTAFLLITINAFGCVIETIYIVLFVSYANKKTRISTLKVLGLLNFLGFAAIVLVCELLTKGSTREKVLGGICVGFSVSVFAAPLSIMRVVVRTRSVEFMPFSLSLFLTISAVTWLFYGLAIKDFYVALPNVLGAFLGAVQMILYIIFKYYKTPVAQKTDKSKDVSDHSIDIAKLTTVIPGAVLDSAVHQPPALHNVPETKIQLTEVKSQNMTDPKDQINKDVQKQSQV.

At 1-7 (MALTNNL) the chain is on the extracellular side. A helical membrane pass occupies residues 8–28 (WAFVFGILGNIISFVVFLAPV). A MtN3/slv 1 domain is found at 10-97 (FVFGILGNII…VLFVSYANKK (88 aa)). Topologically, residues 29-42 (PTFVRICKKKSTEG) are cytoplasmic. Residues 43 to 63 (FQSLPYVSALFSAMLWIYYAM) traverse the membrane as a helical segment. Topologically, residues 64–69 (QKDGTA) are extracellular. A helical membrane pass occupies residues 70-90 (FLLITINAFGCVIETIYIVLF). The Cytoplasmic portion of the chain corresponds to 91–104 (VSYANKKTRISTLK). Residues 105 to 125 (VLGLLNFLGFAAIVLVCELLT) form a helical membrane-spanning segment. Over 126-132 (KGSTREK) the chain is Extracellular. The chain crosses the membrane as a helical span at residues 133 to 153 (VLGGICVGFSVSVFAAPLSIM). The MtN3/slv 2 domain occupies 133–216 (VLGGICVGFS…MILYIIFKYY (84 aa)). Residues 154–166 (RVVVRTRSVEFMP) are Cytoplasmic-facing. The helical transmembrane segment at 167–187 (FSLSLFLTISAVTWLFYGLAI) threads the bilayer. Residues 188–192 (KDFYV) lie on the Extracellular side of the membrane. The helical transmembrane segment at 193–213 (ALPNVLGAFLGAVQMILYIIF) threads the bilayer. At 214 to 294 (KYYKTPVAQK…NKDVQKQSQV (81 aa)) the chain is on the cytoplasmic side. The segment at 273–294 (KSQNMTDPKDQINKDVQKQSQV) is disordered. Residues 279–294 (DPKDQINKDVQKQSQV) show a composition bias toward basic and acidic residues.

This sequence belongs to the SWEET sugar transporter family. In terms of assembly, forms heterooligomers with SWEET1, SWEET3, SWEET6, SWEET7, SWEET8, SWEET9, SWEET11 and SWEET17. In terms of tissue distribution, expressed at low levels in leaves.

The protein resides in the cell membrane. Functionally, mediates both low-affinity uptake and efflux of sugar across the plasma membrane. Involved in nurturing the male gametophyte. The chain is Bidirectional sugar transporter SWEET13 from Arabidopsis thaliana (Mouse-ear cress).